Reading from the N-terminus, the 470-residue chain is Transcription factor SOX-8 (470 aa).

A compositionally biased stretch (basic and acidic residues) spans M1 to L12. The segment at M1–L60 is disordered. The dimerization (DIM) stretch occupies residues A67–P107. Residues V109 to K177 constitute a DNA-binding region (HMG box). Composition is skewed to basic and acidic residues over residues E163–Y178, D219–G228, and T242–R257. 2 disordered regions span residues E163–R257 and A327–S381. The transactivation domain (TAM) stretch occupies residues P233 to D308. Low complexity predominate over residues S338 to S349. The tract at residues R353 to P470 is transactivation domain (TAC). Residues E359–G372 are compositionally biased toward polar residues. Residues S424–F432 carry the 9aaTAD motif.

In terms of tissue distribution, widely expressed in the embryo.

It localises to the nucleus. In terms of biological role, transcription factor that may play a role in central nervous system, limb and facial development. May be involved in male sex determination. Binds the consensus motif 5'-[AT][AT]CAA[AT]G-3'. The chain is Transcription factor SOX-8 (SOX8) from Gallus gallus (Chicken).